Reading from the N-terminus, the 486-residue chain is H2.0-like homeobox protein (486 aa).

2 disordered regions span residues 83–173 (ASFQ…SSKD) and 330–486 (KWRH…LGGL). A compositionally biased stretch (low complexity) spans 125-135 (QQQQQQQQPQQ). Positions 276–335 (RSWSRAVFSNLQRKGLEKRFEIQKYVTKPDRKQLAAMLGLTDAQVKVWFQNRRMKWRHSK) form a DNA-binding region, homeobox. Composition is skewed to basic and acidic residues over residues 334–349 (SKEA…EAGE) and 363–372 (EERSPSRSEG). Positions 373 to 383 (EAESESSDPES) are enriched in acidic residues. The span at 390-401 (DTERTEGTERSL) shows a compositional bias: basic and acidic residues. The span at 409–420 (ASAAGALLAASS) shows a compositional bias: low complexity. Residues 421 to 440 (GGSGGSGGGGGGGFNFGGLS) are compositionally biased toward gly residues. A compositionally biased stretch (low complexity) spans 441 to 474 (SGSTTSAGSSGSHSSGGASELLPAPQPSLSSAPK). The segment covering 475-486 (SPEPVPAPLGGL) has biased composition (pro residues).

This sequence belongs to the H2.0 homeobox family.

The protein localises to the nucleus. In terms of biological role, transcription factor required for TBX21/T-bet-dependent maturation of Th1 cells as well as maintenance of Th1-specific gene expression. Involved in embryogenesis and hematopoiesis. The protein is H2.0-like homeobox protein (HLX) of Bos taurus (Bovine).